We begin with the raw amino-acid sequence, 211 residues long: Urease accessory protein UreE (211 aa).

The disordered stretch occupies residues 134-211 (FDPEGGAYAP…DHHGHGHEHK (78 aa)). A compositionally biased stretch (basic and acidic residues) spans 147–202 (PSHDHAGHDHAHDSHAHHDHDHGKHAQHDHGKHDHAHHDHAAHDDHHVHDEHCGHD).

Belongs to the UreE family.

The protein resides in the cytoplasm. Its function is as follows. Involved in urease metallocenter assembly. Binds nickel. Probably functions as a nickel donor during metallocenter assembly. This Rhodopseudomonas palustris (strain BisB18) protein is Urease accessory protein UreE.